The chain runs to 327 residues: Nocardicin C-9' epimerase (327 aa).

At Lys-43 the chain carries N6-(pyridoxal phosphate)lysine.

Belongs to the ACC deaminase/D-cysteine desulfhydrase family. It depends on pyridoxal 5'-phosphate as a cofactor.

The enzyme catalyses isonocardicin C = nocardicin C. The catalysed reaction is isonocardicin A = nocardicin A. The protein operates within antibiotic biosynthesis. Functionally, involved in the biosynthesis of the beta-lactam antibiotic nocardicin A. Catalyzes the interconversion of the nocardicin homoseryl side chain in both nocardicin A with isonocardicin A, and nocardicin C with isonocardicin C. This chain is Nocardicin C-9' epimerase, found in Nocardia uniformis subsp. tsuyamanensis.